The chain runs to 201 residues: Dephospho-CoA kinase (201 aa).

In terms of domain architecture, DPCK spans 3–201 (VIGLTGGIAS…WKERIEKNPR (199 aa)). 11–16 (ASGKST) is a binding site for ATP.

It belongs to the CoaE family.

The protein localises to the cytoplasm. The enzyme catalyses 3'-dephospho-CoA + ATP = ADP + CoA + H(+). It participates in cofactor biosynthesis; coenzyme A biosynthesis; CoA from (R)-pantothenate: step 5/5. Its function is as follows. Catalyzes the phosphorylation of the 3'-hydroxyl group of dephosphocoenzyme A to form coenzyme A. In Geobacter metallireducens (strain ATCC 53774 / DSM 7210 / GS-15), this protein is Dephospho-CoA kinase.